A 206-amino-acid chain; its full sequence is Small ribosomal subunit protein uS4 (206 aa).

The region spanning 96–158 (GRLDNVVYRM…AKKQSRIKAA (63 aa)) is the S4 RNA-binding domain.

Belongs to the universal ribosomal protein uS4 family. Part of the 30S ribosomal subunit. Contacts protein S5. The interaction surface between S4 and S5 is involved in control of translational fidelity.

One of the primary rRNA binding proteins, it binds directly to 16S rRNA where it nucleates assembly of the body of the 30S subunit. In terms of biological role, with S5 and S12 plays an important role in translational accuracy. The polypeptide is Small ribosomal subunit protein uS4 (Vibrio cholerae serotype O1 (strain ATCC 39541 / Classical Ogawa 395 / O395)).